Here is a 293-residue protein sequence, read N- to C-terminus: uncharacterized protein (293 aa).

7 consecutive transmembrane segments (helical) span residues 55–75, 77–97, 110–130, 138–158, 164–184, 193–213, and 226–246; these read FLLC…VFLC, TGFM…LLHG, PGLL…ASAC, FSGL…GLAG, WQVI…ALYL, LFLG…VFDT, and LLTL…LILF. N287 carries an N-linked (GlcNAc...) asparagine; by host glycan.

The protein belongs to the cytomegalovirus US12 family.

Its subcellular location is the membrane. This is an uncharacterized protein from Human cytomegalovirus (strain AD169) (HHV-5).